The following is a 162-amino-acid chain: Protein-export protein SecB (162 aa).

It belongs to the SecB family. In terms of assembly, homotetramer, a dimer of dimers. One homotetramer interacts with 1 SecA dimer.

Its subcellular location is the cytoplasm. One of the proteins required for the normal export of preproteins out of the cell cytoplasm. It is a molecular chaperone that binds to a subset of precursor proteins, maintaining them in a translocation-competent state. It also specifically binds to its receptor SecA. This chain is Protein-export protein SecB, found in Pseudomonas savastanoi pv. phaseolicola (strain 1448A / Race 6) (Pseudomonas syringae pv. phaseolicola (strain 1448A / Race 6)).